Here is a 379-residue protein sequence, read N- to C-terminus: Alanine racemase (379 aa).

The Proton acceptor; specific for D-alanine role is filled by lysine 37. At lysine 37 the chain carries N6-(pyridoxal phosphate)lysine. Arginine 137 contributes to the substrate binding site. Tyrosine 269 functions as the Proton acceptor; specific for L-alanine in the catalytic mechanism. A substrate-binding site is contributed by methionine 317.

This sequence belongs to the alanine racemase family. The cofactor is pyridoxal 5'-phosphate.

The catalysed reaction is L-alanine = D-alanine. It functions in the pathway amino-acid biosynthesis; D-alanine biosynthesis; D-alanine from L-alanine: step 1/1. In terms of biological role, catalyzes the interconversion of L-alanine and D-alanine. May also act on other amino acids. In Citrifermentans bemidjiense (strain ATCC BAA-1014 / DSM 16622 / JCM 12645 / Bem) (Geobacter bemidjiensis), this protein is Alanine racemase (alr).